A 115-amino-acid polypeptide reads, in one-letter code: Large ribosomal subunit protein bL19 (115 aa).

This sequence belongs to the bacterial ribosomal protein bL19 family.

Its function is as follows. This protein is located at the 30S-50S ribosomal subunit interface and may play a role in the structure and function of the aminoacyl-tRNA binding site. In Francisella tularensis subsp. holarctica (strain FTNF002-00 / FTA), this protein is Large ribosomal subunit protein bL19.